The sequence spans 89 residues: Small ribosomal subunit protein uS15 (89 aa).

It belongs to the universal ribosomal protein uS15 family. In terms of assembly, part of the 30S ribosomal subunit. Forms a bridge to the 50S subunit in the 70S ribosome, contacting the 23S rRNA.

Its function is as follows. One of the primary rRNA binding proteins, it binds directly to 16S rRNA where it helps nucleate assembly of the platform of the 30S subunit by binding and bridging several RNA helices of the 16S rRNA. Functionally, forms an intersubunit bridge (bridge B4) with the 23S rRNA of the 50S subunit in the ribosome. The polypeptide is Small ribosomal subunit protein uS15 (Chlorobium luteolum (strain DSM 273 / BCRC 81028 / 2530) (Pelodictyon luteolum)).